The chain runs to 129 residues: Lysozyme C (129 aa).

The C-type lysozyme domain maps to Lys1–Leu129. Disulfide bonds link Cys6/Cys127, Cys30/Cys115, Cys64/Cys80, and Cys76/Cys94. Catalysis depends on residues Glu35 and Asp52.

It belongs to the glycosyl hydrolase 22 family. Monomer.

The protein localises to the secreted. The enzyme catalyses Hydrolysis of (1-&gt;4)-beta-linkages between N-acetylmuramic acid and N-acetyl-D-glucosamine residues in a peptidoglycan and between N-acetyl-D-glucosamine residues in chitodextrins.. Lysozymes have primarily a bacteriolytic function; those in tissues and body fluids are associated with the monocyte-macrophage system and enhance the activity of immunoagents. The sequence is that of Lysozyme C (LYZ) from Lophophorus impejanus (Himalayan monal pheasant).